Consider the following 145-residue polypeptide: Peptide methionine sulfoxide reductase MsrB (145 aa).

The MsrB domain occupies 6-129 (KNERLKQLTD…NSAALRFIPV (124 aa)). Catalysis depends on Cys-118, which acts as the Nucleophile.

This sequence belongs to the MsrB Met sulfoxide reductase family.

The enzyme catalyses L-methionyl-[protein] + [thioredoxin]-disulfide + H2O = L-methionyl-(R)-S-oxide-[protein] + [thioredoxin]-dithiol. This Listeria innocua serovar 6a (strain ATCC BAA-680 / CLIP 11262) protein is Peptide methionine sulfoxide reductase MsrB.